A 219-amino-acid polypeptide reads, in one-letter code: C-type lectin domain family 4 member E (219 aa).

Residues 1–19 (MNSSKSSETQCTERGCFSS) are Cytoplasmic-facing. A helical; Signal-anchor for type II membrane protein transmembrane segment spans residues 20–40 (QMFLWTVAGIPILFLSACFIT). The Extracellular segment spans residues 41-219 (RCVVTFRIFQ…INPLNKGKSL (179 aa)). Asn62 is a glycosylation site (N-linked (GlcNAc...) asparagine). An intrachain disulfide couples Cys80 to Cys91. A C-type lectin domain is found at 87–206 (FQSSCYFFST…CFLNYFRICE (120 aa)). Asn107 is a glycosylation site (N-linked (GlcNAc...) asparagine). 2 disulfide bridges follow: Cys108–Cys205 and Cys179–Cys197. Ca(2+) contacts are provided by Val117, Asn119, Glu123, Glu169, Asn171, Asn193, Asp194, and Glu206. A Confers specificity for glucose/mannose-type carbohydrates motif is present at residues 169 to 171 (EPN).

As to quaternary structure, monomer and homodimer. Interacts with signaling adapter Fc receptor gamma chain/FCER1G to form a functional complex; the interaction is direct. Alternatively, acts as a bridge for interaction between CLEC4D and FCER1G. A heterodimer of CLEC4E and CLEC4D associates with FCER1G to form a functional complex. Interacts with SAP130 nuclear protein that is released from necrotic cells; the interaction is direct. As to expression, expressed in monocytes and macrophages.

Its subcellular location is the cell membrane. It is found in the cell projection. It localises to the phagocytic cup. Functionally, calcium-dependent lectin that acts as a pattern recognition receptor (PRR) of the innate immune system: recognizes damage-associated molecular patterns (DAMPs) of abnormal self and pathogen-associated molecular patterns (PAMPs) of bacteria and fungi. The PAMPs notably include mycobacterial trehalose 6,6'-dimycolate (TDM), a cell wall glycolipid with potent adjuvant immunomodulatory functions. Interacts with signaling adapter Fc receptor gamma chain/FCER1G to form a functional complex in myeloid cells. Binding of mycobacterial trehalose 6,6'-dimycolate (TDM) to this receptor complex leads to phosphorylation of the immunoreceptor tyrosine-based activation motif (ITAM) of FCER1G, triggering activation of SYK, CARD9 and NF-kappa-B, consequently driving maturation of antigen-presenting cells and shaping antigen-specific priming of T-cells toward effector T-helper 1 and T-helper 17 cell subtypes. Also recognizes alpha-mannose residues on pathogenic fungi of the genus Malassezia and mediates macrophage activation. Through recognition of DAMPs released upon nonhomeostatic cell death, enables immune sensing of damaged self and promotes inflammatory cell infiltration into the damaged tissue. This chain is C-type lectin domain family 4 member E, found in Homo sapiens (Human).